A 55-amino-acid polypeptide reads, in one-letter code: uncharacterized protein (55 aa).

This is an uncharacterized protein from Acidithiobacillus ferrooxidans (Thiobacillus ferrooxidans).